We begin with the raw amino-acid sequence, 859 residues long: Glucans biosynthesis glucosyltransferase H (859 aa).

Transmembrane regions (helical) follow at residues 144–166 (YILLILMLGQTIVAGSYMKGILP), 200–222 (LLLFGILFCWVSAGFWTALMGFL), 523–545 (VMSYLSAPLWFFFLVLSTALLAV), 573–595 (VALFSTTIVLLFLPKLLSVILIW), 608–630 (VTVSMLLEMLFSVLLAPVRMLFH), and 684–706 (SFLWWLAPIVVSLMLSIPVSVIS).

Belongs to the glycosyltransferase 2 family. OpgH subfamily.

The protein resides in the cell inner membrane. The protein operates within glycan metabolism; osmoregulated periplasmic glucan (OPG) biosynthesis. Involved in the biosynthesis of osmoregulated periplasmic glucans (OPGs). The sequence is that of Glucans biosynthesis glucosyltransferase H from Pseudomonas syringae pv. tomato (strain ATCC BAA-871 / DC3000).